Consider the following 344-residue polypeptide: Phosphoribosylformylglycinamidine cyclo-ligase (344 aa).

This sequence belongs to the AIR synthase family.

It localises to the cytoplasm. The enzyme catalyses 2-formamido-N(1)-(5-O-phospho-beta-D-ribosyl)acetamidine + ATP = 5-amino-1-(5-phospho-beta-D-ribosyl)imidazole + ADP + phosphate + H(+). It participates in purine metabolism; IMP biosynthesis via de novo pathway; 5-amino-1-(5-phospho-D-ribosyl)imidazole from N(2)-formyl-N(1)-(5-phospho-D-ribosyl)glycinamide: step 2/2. The protein is Phosphoribosylformylglycinamidine cyclo-ligase of Exiguobacterium sp. (strain ATCC BAA-1283 / AT1b).